A 271-amino-acid chain; its full sequence is Inactive phospholipid phosphatase 7 (271 aa).

The tract at residues 1–69 (MPVSQSRARA…RQSQQLPEED (69 aa)) is disordered. Topologically, residues 1–112 (MPVSQSRARA…AASWASARSM (112 aa)) are cytoplasmic. Residues 24–36 (SLNQPPKGTQEPR) are compositionally biased toward polar residues. A phosphoserine mark is found at Ser-43 and Ser-62. The interval 70 to 91 (CMQLNPSFKGIAFNSLLAIDIC) is interaction with MTOR. A helical membrane pass occupies residues 113–133 (VKLIGITSHGIPWIGGTILCL). Topologically, residues 134 to 141 (VRSSTLAG) are extracellular. The chain crosses the membrane as a helical span at residues 142–162 (QEVLMNLLLALLLDIMTVAGV). At 163-202 (QKLIKRRGPYETSPGLLDYLTMDIYAFPAGHASRAAMVSK) the chain is on the cytoplasmic side. Residues 203 to 223 (FFLSHLVLAVPLRVLLVLWAF) form a helical membrane-spanning segment. The Extracellular segment spans residues 224 to 239 (CVGLSRVMIGRHHITD). Residues 240–260 (VISGFIIGYFQFRLVELVWMS) form a helical membrane-spanning segment. Residues 261-271 (SNTCQMLISAW) lie on the Cytoplasmic side of the membrane.

Belongs to the PA-phosphatase related phosphoesterase family. Homo- and heterooligomer. Interacts with MTOR; controls MTOR-dependent IGF2 expression during myoblast differentiation.

It localises to the nucleus envelope. It is found in the endoplasmic reticulum membrane. The protein localises to the membrane. Its function is as follows. Plays a role as negative regulator of myoblast differentiation, in part through effects on MTOR signaling. Has no detectable enzymatic activity. The sequence is that of Inactive phospholipid phosphatase 7 from Rattus norvegicus (Rat).